A 90-amino-acid chain; its full sequence is Large ribosomal subunit protein bL27 (90 aa).

A disordered region spans residues 1–21 (MAHKKAGGSSRNGRDSQAKRL).

Belongs to the bacterial ribosomal protein bL27 family.

The polypeptide is Large ribosomal subunit protein bL27 (Laribacter hongkongensis (strain HLHK9)).